Consider the following 440-residue polypeptide: Integral membrane protein GPR180 (440 aa).

Positions 1–22 are cleaved as a signal peptide; sequence MGGLRLLAVALTCCWWPQGSQG. N105 and N110 each carry an N-linked (GlcNAc...) asparagine glycan. Helical transmembrane passes span 173–193, 202–222, 249–269, 284–304, 321–341, 360–380, and 389–409; these read FFFL…QSLW, MHMI…SALA, IASQ…WTIV, TPAS…LLLW, LAGI…GCGL, FAKG…ISVI, and VITI…YRLF.

The protein localises to the membrane. This is Integral membrane protein GPR180 (GPR180) from Homo sapiens (Human).